Consider the following 520-residue polypeptide: BTB/POZ domain-containing protein At3g50780 (520 aa).

The tract at residues 43–68 is disordered; it reads SHNSLTKHKQSSPALQPPKPEKKPSS. One can recognise a BTB domain in the interval 127-196; that stretch reads AKVILVGKQG…MYCKDMKQRL (70 aa).

Its pathway is protein modification; protein ubiquitination. In terms of biological role, may act as a substrate-specific adapter of an E3 ubiquitin-protein ligase complex (CUL3-RBX1-BTB) which mediates the ubiquitination and subsequent proteasomal degradation of target proteins. This Arabidopsis thaliana (Mouse-ear cress) protein is BTB/POZ domain-containing protein At3g50780.